The chain runs to 188 residues: Acireductone dioxygenase (188 aa).

Positions 97, 99, 103, and 141 each coordinate Fe(2+). Ni(2+) contacts are provided by histidine 97, histidine 99, glutamate 103, and histidine 141.

The protein belongs to the acireductone dioxygenase (ARD) family. In terms of assembly, monomer. Fe(2+) serves as cofactor. Ni(2+) is required as a cofactor.

The catalysed reaction is 1,2-dihydroxy-5-(methylsulfanyl)pent-1-en-3-one + O2 = 3-(methylsulfanyl)propanoate + CO + formate + 2 H(+). The enzyme catalyses 1,2-dihydroxy-5-(methylsulfanyl)pent-1-en-3-one + O2 = 4-methylsulfanyl-2-oxobutanoate + formate + 2 H(+). It participates in amino-acid biosynthesis; L-methionine biosynthesis via salvage pathway; L-methionine from S-methyl-5-thio-alpha-D-ribose 1-phosphate: step 5/6. Its function is as follows. Catalyzes 2 different reactions between oxygen and the acireductone 1,2-dihydroxy-3-keto-5-methylthiopentene (DHK-MTPene) depending upon the metal bound in the active site. Fe-containing acireductone dioxygenase (Fe-ARD) produces formate and 2-keto-4-methylthiobutyrate (KMTB), the alpha-ketoacid precursor of methionine in the methionine recycle pathway. Ni-containing acireductone dioxygenase (Ni-ARD) produces methylthiopropionate, carbon monoxide and formate, and does not lie on the methionine recycle pathway. The chain is Acireductone dioxygenase from Xylella fastidiosa (strain M23).